Reading from the N-terminus, the 1594-residue chain is Mucin-like protein (1594 aa).

Over 1–1530 (DTTAGPDTTS…YETREDGLEM (1530 aa)) the chain is Extracellular. TSP type-1 domains are found at residues 141–196 (DGGF…GSCP), 198–253 (DGNF…PPCP), and 255–310 (DGNF…GPCP). Intrachain disulfides connect Cys153/Cys190, Cys157/Cys195, Cys168/Cys180, Cys210/Cys247, Cys214/Cys252, Cys225/Cys237, Cys267/Cys304, Cys271/Cys309, and Cys282/Cys294. The 167-residue stretch at 400–566 (LTISDDAFEQ…GVWFFRLEMN (167 aa)) folds into the NIDO domain. The region spanning 568 to 706 (ILSLAGKKCN…RSCFGYTLRR (139 aa)) is the AMOP domain. In terms of domain architecture, VWFD spans 706 to 901 (RRGLIFGDPH…KWQINASQSL (196 aa)). EGF-like domains are found at residues 1063 to 1108 (LILL…QYCQ) and 1110 to 1156 (KIDA…SICE). 14 cysteine pairs are disulfide-bonded: Cys1067–Cys1075, Cys1069–Cys1096, Cys1098–Cys1107, Cys1114–Cys1127, Cys1121–Cys1141, Cys1144–Cys1155, Cys1161–Cys1173, Cys1169–Cys1182, Cys1285–Cys1296, Cys1292–Cys1305, Cys1307–Cys1320, Cys1326–Cys1341, Cys1334–Cys1350, and Cys1352–Cys1363. The EGF-like 3; calcium-binding domain occupies 1157–1191 (DIDECSDANVSKCDHSCINLPGSYVCDCNQGFSLE). Residues 1281–1321 (DINECTTHRHKCSQICHNLDGSYTCSCQPGFNLSPDQTTCE) form the EGF-like 4; calcium-binding domain. In terms of domain architecture, EGF-like 5; calcium-binding spans 1322-1364 (DIDECGLINEAHCEGSLEICINTMGSFRCECQDGFHRVNDTCQ). The helical transmembrane segment at 1531-1551 (IWLLVGVSVAVAVPLMIVIVI) threads the bilayer. Topologically, residues 1552 to 1593 (LYREYRRIAKQRRKTNNFDLRQWSGARERTIYSGFTNSKSAR) are cytoplasmic.

As to expression, component of the acid-insoluble and acid-soluble organic matrix of the aragonitic skeleton (at protein level).

The protein localises to the membrane. This Acropora millepora (Staghorn coral) protein is Mucin-like protein.